A 230-amino-acid chain; its full sequence is uncharacterized protein (230 aa).

Positions 1-57 are disordered; sequence MPGPHSPNPGVGTNGPAPYPEPSSHEPQALDYPHDLGAAEPAFAPGPADDAALPPAA. The segment covering 38 to 55 has biased composition (low complexity); sequence AAEPAFAPGPADDAALPP. The chain crosses the membrane as a helical span at residues 75-95; it reads LLIGIVVALALVSAMTAAIIY.

It is found in the membrane. This is an uncharacterized protein from Mycobacterium tuberculosis (strain CDC 1551 / Oshkosh).